The following is a 907-amino-acid chain: Whirlin (907 aa).

In terms of domain architecture, PDZ 1 spans 140 to 223 (LVSLRRAKAH…LVLSVYSAGR (84 aa)). A disordered region spans residues 243–264 (SISPPSGLPQPHGGALRQQEGD). Residues 279-361 (KVNLVLGDGR…LILTVKDVGR (83 aa)) enclose the PDZ 2 domain. Disordered stretches follow at residues 502-540 (SMKARQPPGPGAGDTYSMVSYSDTGSSTGSHGTSTTVSS), 565-663 (SVDD…SSKR), 684-717 (QSPPHLKSPSAEATVAGGCLLPPSPSGHPDQTGT), and 742-815 (PQTR…PTST). Low complexity predominate over residues 521-540 (SYSDTGSSTGSHGTSTTVSS). Over residues 609 to 626 (PPSSMPSCSGTVFSAPQN) the composition is skewed to polar residues. The span at 628-642 (SPPAGTAPTPGTSSA) shows a compositional bias: low complexity. Ser-685 carries the phosphoserine modification. A compositionally biased stretch (polar residues) spans 743–762 (QTRTASTLSQLSDSGQTLSE). Residues 789 to 800 (SSKELPRNERPT) show a composition bias toward basic and acidic residues. Residues 816 to 899 (LVRVKKSAAT…TKDRDYIDFL (84 aa)) enclose the PDZ 3 domain.

As to quaternary structure, forms homooligomers. Interacts (via C-terminal PDZ domain) with MYO15A; this interaction is necessary for localization of WHRN to stereocilia tips. Interacts (via C-terminal PDZ domain) with MPP1/p55. Interacts with LRRC4C/NGL1. Interacts with MYO7A. Interacts with RPGR. Interacts with EPS8. Interacts with CASK. Interacts with CIB2. Component of USH2 complex, composed of ADGRV1, PDZD7, USH2A and WHRN. Interacts (via PDZ domains) with PDZD7; the interaction is direct. Interacts (via N-terminal PDZ domain) with USH2A (via cytoplasmic region). Interacts with ADGRV1/MASS1 (via cytoplasmic region).

Its subcellular location is the cytoplasm. The protein localises to the cell projection. It localises to the stereocilium. It is found in the growth cone. The protein resides in the photoreceptor inner segment. Its subcellular location is the synapse. Functionally, involved in hearing and vision as member of the USH2 complex. Necessary for elongation and maintenance of inner and outer hair cell stereocilia in the organ of Corti in the inner ear. Involved in the maintenance of the hair bundle ankle region, which connects stereocilia in cochlear hair cells of the inner ear. In retina photoreceptors, required for the maintenance of periciliary membrane complex that seems to play a role in regulating intracellular protein transport. The chain is Whirlin from Homo sapiens (Human).